The primary structure comprises 430 residues: Nitroalkane oxidase (430 aa).

FAD-binding positions include 132–135, 140–142, 170–172, Arg-301, Gln-311, 372–376, and 397–401; these read LVFS, VAN, WAT, NAVGI, and IFDGG. Asp-399 serves as the catalytic Proton acceptor.

It belongs to the acyl-CoA dehydrogenase family. As to quaternary structure, homotetramer. It depends on FAD as a cofactor.

It carries out the reaction a primary nitroalkane + O2 + H2O = an aldehyde + nitrite + H2O2 + H(+). The catalysed reaction is a secondary nitroalkane + O2 + H2O = a ketone + nitrite + H2O2 + H(+). Functionally, nitroalkane oxidase (NAO) catalyzes the oxidation of nitroalkanes to the corresponding aldehydes or ketones with the release of nitrite and the consumption of molecular oxygen to yield hydrogen peroxide. NAO is unusual, since it catalyzes substrate oxidation by removing a substrate proton to form a carbanion intermediate. Prefers longer nitroalkanes, with 1-nitrohexane having the highest activity. This is Nitroalkane oxidase from Podospora anserina (strain S / ATCC MYA-4624 / DSM 980 / FGSC 10383) (Pleurage anserina).